We begin with the raw amino-acid sequence, 1005 residues long: Translocated actin-recruiting phosphoprotein (1005 aa).

Over residues 1–10 (MTNSISGDQP) the composition is skewed to polar residues. Disordered regions lie at residues 1–36 (MTNS…SVST), 74–128 (PTVT…DYEP), 191–214 (SIDD…NSLR), 343–365 (SIDD…LNSL), 611–645 (WGTQ…TPSS), 661–748 (NIRD…DGPA), and 792–847 (TGTS…TSLM). Low complexity-rich tracts occupy residues 11 to 36 (TVTT…SVST) and 74 to 121 (PTVT…SSDH). Composition is skewed to polar residues over residues 191–205 (SIDD…NTSG) and 343–357 (SIDD…NTSG). Composition is skewed to low complexity over residues 661-700 (NIRD…TDDI), 715-734 (GDIS…VSSS), and 831-846 (STTT…TTSL).

This sequence belongs to the chlamydial CPn_0572/CT_456/TC_0741 family. Phosphorylated on a tyrosine on attachment to the host cell. Tyrosine phosphorylation is temporally and spatially associated with recruitment of actin to the site of chlamydial entry. Phosphorylated Tarp seems to remain cytoplasmically exposed on the inclusion membrane at one side of internalized elementary bodies for several hours after entry.

The protein resides in the secreted. In terms of biological role, appears to initiate or participate in signaling events that regulate the actin recruitment, which ultimately leads to internalization. The polypeptide is Translocated actin-recruiting phosphoprotein (tarP) (Chlamydia trachomatis serovar L2 (strain ATCC VR-902B / DSM 19102 / 434/Bu)).